The primary structure comprises 242 residues: Dihydropteridine reductase (242 aa).

12-36 (LVYGGRGALGSRCVQAFRARNWWVA) lines the NADP(+) pocket. N6-succinyllysine is present on residues lysine 71, lysine 77, lysine 94, and lysine 100. Residue tyrosine 148 is the Proton acceptor of the active site.

The protein belongs to the short-chain dehydrogenases/reductases (SDR) family. Homodimer.

The enzyme catalyses 5,6,7,8-tetrahydropteridine + NAD(+) = 6,7-dihydropteridine + NADH + H(+). It catalyses the reaction 5,6,7,8-tetrahydropteridine + NADP(+) = 6,7-dihydropteridine + NADPH + H(+). Catalyzes the conversion of quinonoid dihydrobiopterin into tetrahydrobiopterin. This chain is Dihydropteridine reductase (QDPR), found in Bos taurus (Bovine).